A 176-amino-acid chain; its full sequence is RING-H2 finger protein ATL14 (176 aa).

Positions 1-26 (MSITIPYDGSISREPSPSPPPPKANT) are disordered. Residues 37 to 57 (FLIGLIMIPVAITAFIFILTS) form a helical membrane-spanning segment. The RING-type; atypical zinc-finger motif lies at 115–157 (CVVCIDGFRQGQWCRKLPRCGHVFHRKCVDLWLIKVSTCPICR).

This sequence belongs to the RING-type zinc finger family. ATL subfamily.

It is found in the membrane. It carries out the reaction S-ubiquitinyl-[E2 ubiquitin-conjugating enzyme]-L-cysteine + [acceptor protein]-L-lysine = [E2 ubiquitin-conjugating enzyme]-L-cysteine + N(6)-ubiquitinyl-[acceptor protein]-L-lysine.. It functions in the pathway protein modification; protein ubiquitination. This is RING-H2 finger protein ATL14 (ATL14) from Arabidopsis thaliana (Mouse-ear cress).